Here is a 405-residue protein sequence, read N- to C-terminus: Cystathionine gamma-lyase (405 aa).

Residues Arg62, Tyr114, and Arg119 each contribute to the substrate site. Lys212 bears the N6-(pyridoxal phosphate)lysine mark. Glu339 serves as a coordination point for substrate.

Belongs to the trans-sulfuration enzymes family. Homotetramer. Interacts with CALM in a calcium-dependent manner. It depends on pyridoxal 5'-phosphate as a cofactor.

The protein localises to the cytoplasm. The enzyme catalyses L,L-cystathionine + H2O = 2-oxobutanoate + L-cysteine + NH4(+). It catalyses the reaction L-cysteine + H2O = hydrogen sulfide + pyruvate + NH4(+) + H(+). The catalysed reaction is L-homocysteine + H2O = 2-oxobutanoate + hydrogen sulfide + NH4(+) + H(+). It carries out the reaction L-homoserine = 2-oxobutanoate + NH4(+). The enzyme catalyses L-selenocystathionine + H2O = L-selenocysteine + 2-oxobutanoate + NH4(+). The protein operates within amino-acid biosynthesis; L-cysteine biosynthesis; L-cysteine from L-homocysteine and L-serine: step 2/2. In terms of biological role, catalyzes the last step in the trans-sulfuration pathway from L-methionine to L-cysteine in a pyridoxal-5'-phosphate (PLP)-dependent manner, which consists on cleaving the L,L-cystathionine molecule into L-cysteine, ammonia and 2-oxobutanoate. Part of the L-cysteine derived from the trans-sulfuration pathway is utilized for biosynthesis of the ubiquitous antioxidant glutathione. Besides its role in the conversion of L-cystathionine into L-cysteine, it utilizes L-cysteine and L-homocysteine as substrates (at much lower rates than L,L-cystathionine) to produce hydrogen sulfide (H2S). In vitro, it converts two L-cysteine molecules into lanthionine and H2S, and two L-homocysteine molecules to homolanthionine and H2S, which can be particularly relevant under conditions of severe hyperhomocysteinemia. Lanthionine and homolanthionine are structural homologs of L,L-cystathionine that differ by the absence or presence of an extra methylene group, respectively. Acts as a cysteine-protein sulfhydrase by mediating sulfhydration of target proteins: sulfhydration consists of converting -SH groups into -SSH on specific cysteine residues of target proteins such as GAPDH, PTPN1 and NF-kappa-B subunit RELA, thereby regulating their function. By generating the gasotransmitter H2S, it participates in a number of physiological processes such as vasodilation, bone protection, and inflammation. Plays an essential role in myogenesis by contributing to the biogenesis of H2S in skeletal muscle tissue. Can also accept homoserine as substrate. Catalyzes the elimination of selenocystathionine (which can be derived from the diet) to yield selenocysteine, ammonia and 2-oxobutanoate. In Sus scrofa (Pig), this protein is Cystathionine gamma-lyase (CTH).